A 92-amino-acid polypeptide reads, in one-letter code: Putative regulatory protein CA_C1717 (92 aa).

The protein belongs to the RemA family.

In Clostridium acetobutylicum (strain ATCC 824 / DSM 792 / JCM 1419 / IAM 19013 / LMG 5710 / NBRC 13948 / NRRL B-527 / VKM B-1787 / 2291 / W), this protein is Putative regulatory protein CA_C1717.